The chain runs to 259 residues: Probable metal transport system ATP-binding protein CT_068 (259 aa).

The region spanning 9–241 (WSVEDLCVNY…AIFQAYGCEL (233 aa)) is the ABC transporter domain. 41–48 (GPNGAGKS) contributes to the ATP binding site.

Belongs to the ABC transporter superfamily.

Its subcellular location is the cell inner membrane. Part of an ATP-driven transport system CT_067/CT_068/CT_069/CT_070 for a metal. Probably responsible for energy coupling to the transport system. This chain is Probable metal transport system ATP-binding protein CT_068, found in Chlamydia trachomatis serovar D (strain ATCC VR-885 / DSM 19411 / UW-3/Cx).